The chain runs to 361 residues: Probable dual-specificity RNA methyltransferase RlmN (361 aa).

Glutamate 91 (proton acceptor) is an active-site residue. Residues 97-329 (QHYGLSVCVT…KKKGVNCVVR (233 aa)) form the Radical SAM core domain. A disulfide bridge connects residues cysteine 104 and cysteine 340. [4Fe-4S] cluster contacts are provided by cysteine 111, cysteine 115, and cysteine 118. S-adenosyl-L-methionine contacts are provided by residues 163-164 (GE), serine 195, 218-220 (SLH), and asparagine 296. Cysteine 340 functions as the S-methylcysteine intermediate in the catalytic mechanism.

The protein belongs to the radical SAM superfamily. RlmN family. [4Fe-4S] cluster serves as cofactor.

The protein resides in the cytoplasm. The enzyme catalyses adenosine(2503) in 23S rRNA + 2 reduced [2Fe-2S]-[ferredoxin] + 2 S-adenosyl-L-methionine = 2-methyladenosine(2503) in 23S rRNA + 5'-deoxyadenosine + L-methionine + 2 oxidized [2Fe-2S]-[ferredoxin] + S-adenosyl-L-homocysteine. It carries out the reaction adenosine(37) in tRNA + 2 reduced [2Fe-2S]-[ferredoxin] + 2 S-adenosyl-L-methionine = 2-methyladenosine(37) in tRNA + 5'-deoxyadenosine + L-methionine + 2 oxidized [2Fe-2S]-[ferredoxin] + S-adenosyl-L-homocysteine. Its function is as follows. Specifically methylates position 2 of adenine 2503 in 23S rRNA and position 2 of adenine 37 in tRNAs. In Streptococcus pneumoniae serotype 4 (strain ATCC BAA-334 / TIGR4), this protein is Probable dual-specificity RNA methyltransferase RlmN.